Reading from the N-terminus, the 530-residue chain is MSTLYLLANLRNRPDGRHSIDFGSLSARESDPVKMPHEITGLFSSDYCSSTSTTLEAEESEAYSKALSRNKRAAGILEHFLNGEQAAAHPSVCLQDRARLRLCEEAILVGAPRGTATRAREGIASYDKMEFLFPGSRQRKSIQMLHVSCPSLQPGATLLDSHSGSVHDSITILSGMCLFTRKILNSTTTNGRLDGQKLRHMPPTLYEMECIARLSAIIADVTTLTQSNFGEDNHPAVNIVLDLPSWHYYQFIEDCIKSDTCSLEEAIDWTEAIKLRRQQLASVLKKAVWHELGQRQVAHKSTLKAIQISPESTVVDELIKETLQRGHQPRLDDILHALSGTPHSLWPQFYSLLRDRDKPHSIRDLGFLFYVFQVVRPALLKAIPCQEAPSSKAPACEQPNLHRGQRQCLPQRPLIISLDDRAERKIYSQAHSLLLRLSRSSNQLVNPTLVQLYMPRRVYIDGNKDGQRLYWHDPSPVLPLLEGTKEQQRRDARNHDHHRRELQQTDILTELYGRDCSANIQGWFKEAGLC.

The short motif at 419-423 (DDRAE) is the Conserved DDXXE motif element.

The protein belongs to the arginine-containing cyclodipeptide synthase family.

The catalysed reaction is L-aspartyl-tRNA(Asp) + L-arginyl-tRNA(Arg) = cyclo(L-arginyl-L-aspartyl) + tRNA(Asp) + tRNA(Arg) + 2 H(+). The protein operates within secondary metabolite biosynthesis. In terms of biological role, arginine-containing cyclodipeptide synthase; part of the cluster that mediates the biosynthesis of a highly modified cyclo-arginine-aspartate dipeptide (cRD). Within the pathway, pthA acts as the scaffold-generating enzyme and is responsible for formation of the cyclo-Arg-Asp diketopiperazine (cRW) from L-arginyl-tRNA(Arg) + L-aspartyl-tRNA(Asp). Additional enzymes from the cluster then further modify the cyclo-Arg-Asp diketopiperazine (cRW) scaffold. In Penicillium thymicola, this protein is Arginine-containing cyclodipeptide synthase pthA.